A 242-amino-acid polypeptide reads, in one-letter code: uncharacterized protein (242 aa).

The span at 1–12 (MKLRRERFERRN) shows a compositional bias: basic and acidic residues. A disordered region spans residues 1-21 (MKLRRERFERRNGSGKNSQSS). Over 1 to 23 (MKLRRERFERRNGSGKNSQSSSS) the chain is Cytoplasmic. A helical transmembrane segment spans residues 24–44 (WMVTFTDLITLILVFFILLFS). Residues 45–242 (MSQIDLQKFK…VIKKSKTTSS (198 aa)) lie on the Extracellular side of the membrane. The segment at 64–91 (GNGLQPDQTSIEKKNTSPSDTKKQEDQQ) is disordered. The span at 73–89 (SIEKKNTSPSDTKKQED) shows a compositional bias: basic and acidic residues. The OmpA-like domain occupies 117 to 238 (ERGVVLVLQE…RVEIVIKKSK (122 aa)).

Belongs to the MotB family.

Its subcellular location is the cell membrane. Its function is as follows. May be involved in some transport function. This is an uncharacterized protein from Bacillus subtilis (strain 168).